Here is a 92-residue protein sequence, read N- to C-terminus: Small ribosomal subunit protein bS16 (92 aa).

Belongs to the bacterial ribosomal protein bS16 family.

This chain is Small ribosomal subunit protein bS16, found in Staphylococcus carnosus (strain TM300).